Consider the following 222-residue polypeptide: Phosphoribosylformylglycinamidine synthase subunit PurQ (222 aa).

In terms of domain architecture, Glutamine amidotransferase type-1 spans 3–222; the sequence is SAVIQLPGLN…LFESVLGRAA (220 aa). The Nucleophile role is filled by cysteine 86. Catalysis depends on residues histidine 196 and glutamate 198.

As to quaternary structure, part of the FGAM synthase complex composed of 1 PurL, 1 PurQ and 2 PurS subunits.

It localises to the cytoplasm. It catalyses the reaction N(2)-formyl-N(1)-(5-phospho-beta-D-ribosyl)glycinamide + L-glutamine + ATP + H2O = 2-formamido-N(1)-(5-O-phospho-beta-D-ribosyl)acetamidine + L-glutamate + ADP + phosphate + H(+). The enzyme catalyses L-glutamine + H2O = L-glutamate + NH4(+). Its pathway is purine metabolism; IMP biosynthesis via de novo pathway; 5-amino-1-(5-phospho-D-ribosyl)imidazole from N(2)-formyl-N(1)-(5-phospho-D-ribosyl)glycinamide: step 1/2. Its function is as follows. Part of the phosphoribosylformylglycinamidine synthase complex involved in the purines biosynthetic pathway. Catalyzes the ATP-dependent conversion of formylglycinamide ribonucleotide (FGAR) and glutamine to yield formylglycinamidine ribonucleotide (FGAM) and glutamate. The FGAM synthase complex is composed of three subunits. PurQ produces an ammonia molecule by converting glutamine to glutamate. PurL transfers the ammonia molecule to FGAR to form FGAM in an ATP-dependent manner. PurS interacts with PurQ and PurL and is thought to assist in the transfer of the ammonia molecule from PurQ to PurL. This chain is Phosphoribosylformylglycinamidine synthase subunit PurQ, found in Chelativorans sp. (strain BNC1).